We begin with the raw amino-acid sequence, 337 residues long: Biotin synthase (337 aa).

Residues 55 to 284 (YFKNTIELCS…KKTILLAGGK (230 aa)) enclose the Radical SAM core domain. [4Fe-4S] cluster-binding residues include C73, C77, and C80. [2Fe-2S] cluster-binding residues include C117, C149, and C209.

Belongs to the radical SAM superfamily. Biotin synthase family. Homodimer. The cofactor is [4Fe-4S] cluster. Requires [2Fe-2S] cluster as cofactor.

It catalyses the reaction (4R,5S)-dethiobiotin + (sulfur carrier)-SH + 2 reduced [2Fe-2S]-[ferredoxin] + 2 S-adenosyl-L-methionine = (sulfur carrier)-H + biotin + 2 5'-deoxyadenosine + 2 L-methionine + 2 oxidized [2Fe-2S]-[ferredoxin]. Its pathway is cofactor biosynthesis; biotin biosynthesis; biotin from 7,8-diaminononanoate: step 2/2. Functionally, catalyzes the conversion of dethiobiotin (DTB) to biotin by the insertion of a sulfur atom into dethiobiotin via a radical-based mechanism. In Caldicellulosiruptor bescii (strain ATCC BAA-1888 / DSM 6725 / KCTC 15123 / Z-1320) (Anaerocellum thermophilum), this protein is Biotin synthase.